The chain runs to 207 residues: Small ribosomal subunit protein uS4 (207 aa).

Residues 31–56 (KCKLDSKPGQHGRTSGARTSDYGNQL) form a disordered region. Polar residues predominate over residues 42-53 (GRTSGARTSDYG). The 61-residue stretch at 97–157 (ARLDNVVYRM…EKSKKQVRIV (61 aa)) folds into the S4 RNA-binding domain.

The protein belongs to the universal ribosomal protein uS4 family. Part of the 30S ribosomal subunit. Contacts protein S5. The interaction surface between S4 and S5 is involved in control of translational fidelity.

Its function is as follows. One of the primary rRNA binding proteins, it binds directly to 16S rRNA where it nucleates assembly of the body of the 30S subunit. With S5 and S12 plays an important role in translational accuracy. The polypeptide is Small ribosomal subunit protein uS4 (Janthinobacterium sp. (strain Marseille) (Minibacterium massiliensis)).